We begin with the raw amino-acid sequence, 553 residues long: Adenine deaminase (553 aa).

Belongs to the metallo-dependent hydrolases superfamily. Adenine deaminase family. Mn(2+) serves as cofactor.

It carries out the reaction adenine + H2O + H(+) = hypoxanthine + NH4(+). This is Adenine deaminase from Methanosarcina acetivorans (strain ATCC 35395 / DSM 2834 / JCM 12185 / C2A).